We begin with the raw amino-acid sequence, 301 residues long: tRNA dimethylallyltransferase (301 aa).

2-9 is a binding site for ATP; that stretch reads GPTASGKT. 4 to 9 is a binding site for substrate; the sequence is TASGKT. 2 interaction with substrate tRNA regions span residues 27–30 and 151–155; these read DSAM and QRIQR.

The protein belongs to the IPP transferase family. Monomer. Requires Mg(2+) as cofactor.

It carries out the reaction adenosine(37) in tRNA + dimethylallyl diphosphate = N(6)-dimethylallyladenosine(37) in tRNA + diphosphate. Functionally, catalyzes the transfer of a dimethylallyl group onto the adenine at position 37 in tRNAs that read codons beginning with uridine, leading to the formation of N6-(dimethylallyl)adenosine (i(6)A). The chain is tRNA dimethylallyltransferase from Coxiella burnetii (strain CbuK_Q154) (Coxiella burnetii (strain Q154)).